The following is a 375-amino-acid chain: Alcohol dehydrogenase 1C (375 aa).

Ser2 carries the post-translational modification N-acetylserine. Phosphoserine is present on Ser23. The Zn(2+) site is built by Cys47, His68, Cys98, Cys101, Cys104, Cys112, and Cys175. NAD(+)-binding positions include 200–205, Asp224, Lys229, Ile270, 293–295, 318–320, and Arg370; these read GLGGVG, VGV, and AIF.

It belongs to the zinc-containing alcohol dehydrogenase family. In terms of assembly, dimer of identical or non-identical chains of class I alcohol dehydrogenase: ADH1A, ADH1B, and ADH1C. It depends on Zn(2+) as a cofactor. In terms of tissue distribution, expressed in kidney.

It is found in the cytoplasm. The enzyme catalyses a primary alcohol + NAD(+) = an aldehyde + NADH + H(+). It catalyses the reaction ethanol + NAD(+) = acetaldehyde + NADH + H(+). In terms of biological role, alcohol dehydrogenase. Exhibits high activity for ethanol oxidation and plays a major role in ethanol catabolism. The protein is Alcohol dehydrogenase 1C (ADH1C) of Papio hamadryas (Hamadryas baboon).